Reading from the N-terminus, the 134-residue chain is Galectin-1 (134 aa).

The residue at position 1 (alanine 1) is an N-acetylalanine. Residues 4–134 (GVAVTNLNLK…GLAFKSITTE (131 aa)) form the Galectin domain. Residues 45-49 (HFNAR), histidine 53, asparagine 62, and 69-72 (WGSE) contribute to the a beta-D-galactoside site.

Homodimer.

The protein resides in the secreted. The protein localises to the extracellular space. Its subcellular location is the extracellular matrix. Its function is as follows. May regulate cell apoptosis and cell differentiation. Binds beta-galactoside and a wide array of complex carbohydrates. In Rhinella arenarum (Argentine common toad), this protein is Galectin-1.